The primary structure comprises 49 residues: Zinc-containing ferredoxin (49 aa).

An N-terminal extension region spans residues 1 to 36; sequence GIDPNYRTSRQVVGEHQGHKVYGPVDPPKVLGIHGT. The Zn(2+) site is built by histidine 16 and histidine 19. Lysine 29 is modified (N6-methyllysine). Histidine 34 contacts Zn(2+). Positions 37–49 are ferredoxin; the sequence is IVXVDFDLCIADG. Residue cysteine 45 participates in [3Fe-4S] cluster binding.

[3Fe-4S] cluster serves as cofactor. It depends on [4Fe-4S] cluster as a cofactor. Zn(2+) is required as a cofactor.

Ferredoxins are iron-sulfur proteins that transfer electrons in a wide variety of metabolic reactions. This chain is Zinc-containing ferredoxin (zfx), found in Acidianus infernus.